The following is a 31-amino-acid chain: Toxin BmKK12 (31 aa).

A Pyrrolidone carboxylic acid modification is found at glutamine 1. 3 disulfides stabilise this stretch: cysteine 4/cysteine 20, cysteine 10/cysteine 25, and cysteine 14/cysteine 27. The residue at position 31 (proline 31) is a Proline amide.

The protein belongs to the short scorpion toxin superfamily. Potassium channel inhibitor family. Alpha-KTx 17 subfamily. In terms of processing, the N-terminus is blocked. As to expression, expressed by the venom gland.

The protein resides in the secreted. In terms of biological role, blocker of potassium channels (Kv). The sequence is that of Toxin BmKK12 from Olivierus martensii (Manchurian scorpion).